The chain runs to 380 residues: Deoxyguanosinetriphosphate triphosphohydrolase-like protein (380 aa).

In terms of domain architecture, HD spans Arg-79–Thr-196.

It belongs to the dGTPase family. Type 2 subfamily.

The protein is Deoxyguanosinetriphosphate triphosphohydrolase-like protein of Deinococcus deserti (strain DSM 17065 / CIP 109153 / LMG 22923 / VCD115).